The sequence spans 428 residues: Probable dual-specificity RNA methyltransferase RlmN 2 (428 aa).

Glu142 serves as the catalytic Proton acceptor. The Radical SAM core domain occupies 148-414; the sequence is FAGRATACVS…STVRQRRGID (267 aa). The cysteines at positions 155 and 419 are disulfide-linked. 3 residues coordinate [4Fe-4S] cluster: Cys162, Cys166, and Cys169. Basic and acidic residues predominate over residues 207–228; that stretch reads MRDPSPGREAGEKSRDEADRHR. The segment at 207-232 is disordered; sequence MRDPSPGREAGEKSRDEADRHRAPPT. S-adenosyl-L-methionine contacts are provided by residues 244-245, Ser276, 299-301, and Asn375; these read GE and SLH. The active-site S-methylcysteine intermediate is Cys419.

Belongs to the radical SAM superfamily. RlmN family. It depends on [4Fe-4S] cluster as a cofactor.

The protein localises to the cytoplasm. It carries out the reaction adenosine(2503) in 23S rRNA + 2 reduced [2Fe-2S]-[ferredoxin] + 2 S-adenosyl-L-methionine = 2-methyladenosine(2503) in 23S rRNA + 5'-deoxyadenosine + L-methionine + 2 oxidized [2Fe-2S]-[ferredoxin] + S-adenosyl-L-homocysteine. The enzyme catalyses adenosine(37) in tRNA + 2 reduced [2Fe-2S]-[ferredoxin] + 2 S-adenosyl-L-methionine = 2-methyladenosine(37) in tRNA + 5'-deoxyadenosine + L-methionine + 2 oxidized [2Fe-2S]-[ferredoxin] + S-adenosyl-L-homocysteine. Its function is as follows. Specifically methylates position 2 of adenine 2503 in 23S rRNA and position 2 of adenine 37 in tRNAs. The protein is Probable dual-specificity RNA methyltransferase RlmN 2 of Opitutus terrae (strain DSM 11246 / JCM 15787 / PB90-1).